The following is a 342-amino-acid chain: Isopentenyl-diphosphate delta-isomerase (342 aa).

A substrate-binding site is contributed by 12–13 (RK). FMN contacts are provided by residues 71–73 (AMT), S101, and N129. Residue 101-103 (SQR) participates in substrate binding. A substrate-binding site is contributed by Q163. E164 is a Mg(2+) binding site. FMN contacts are provided by residues K195, T225, 272–274 (GIR), and 293–294 (AR).

The protein belongs to the IPP isomerase type 2 family. As to quaternary structure, homooctamer. Dimer of tetramers. FMN is required as a cofactor. NADPH serves as cofactor. It depends on Mg(2+) as a cofactor.

It is found in the cytoplasm. It carries out the reaction isopentenyl diphosphate = dimethylallyl diphosphate. Involved in the biosynthesis of isoprenoids. Catalyzes the 1,3-allylic rearrangement of the homoallylic substrate isopentenyl (IPP) to its allylic isomer, dimethylallyl diphosphate (DMAPP). This is Isopentenyl-diphosphate delta-isomerase from Mycolicibacterium gilvum (strain PYR-GCK) (Mycobacterium gilvum (strain PYR-GCK)).